The following is an 897-amino-acid chain: Molybdenum import ATP-binding protein ModC 2 (897 aa).

Positions 6–236 (RGRIDAAFRG…PALPLAYSRD (231 aa)) constitute an ABC transporter domain. Position 38–45 (38–45 (GPSGCGKT)) interacts with ATP. Residues 295 to 365 (ESSILNILPA…VKGVSLVRAS (71 aa)) enclose the Mop domain. The disordered stretch occupies residues 823-848 (LGDRSVLGPREPDAGAKGRKRQNDPE). Basic and acidic residues predominate over residues 832-848 (REPDAGAKGRKRQNDPE).

Belongs to the ABC transporter superfamily. Molybdate importer (TC 3.A.1.8) family. As to quaternary structure, the complex is composed of two ATP-binding proteins (ModC), two transmembrane proteins (ModB) and a solute-binding protein (ModA).

Its subcellular location is the cell inner membrane. The enzyme catalyses molybdate(out) + ATP + H2O = molybdate(in) + ADP + phosphate + H(+). In terms of biological role, part of the ABC transporter complex ModABC involved in molybdenum import. Responsible for energy coupling to the transport system. This is Molybdenum import ATP-binding protein ModC 2 from Bradyrhizobium diazoefficiens (strain JCM 10833 / BCRC 13528 / IAM 13628 / NBRC 14792 / USDA 110).